Here is a 335-residue protein sequence, read N- to C-terminus: Glyceraldehyde-3-phosphate dehydrogenase 2 (335 aa).

Residues 12 to 13 (RI), Asp-35, Arg-79, and Ser-121 contribute to the NAD(+) site. Residues 152 to 154 (SCT) and Thr-183 contribute to the D-glyceraldehyde 3-phosphate site. The Nucleophile role is filled by Cys-153. Asn-184 provides a ligand contact to NAD(+). Residues Arg-198, 211–212 (TG), and Arg-234 contribute to the D-glyceraldehyde 3-phosphate site. Asn-316 provides a ligand contact to NAD(+).

Belongs to the glyceraldehyde-3-phosphate dehydrogenase family. As to quaternary structure, homotetramer.

It is found in the cytoplasm. It catalyses the reaction D-glyceraldehyde 3-phosphate + phosphate + NAD(+) = (2R)-3-phospho-glyceroyl phosphate + NADH + H(+). Its pathway is carbohydrate degradation; glycolysis; pyruvate from D-glyceraldehyde 3-phosphate: step 1/5. Its activity is regulated as follows. Inhibited by pentalenolactone. Catalyzes the oxidative phosphorylation of glyceraldehyde 3-phosphate (G3P) to 1,3-bisphosphoglycerate (BPG) using the cofactor NAD. The first reaction step involves the formation of a hemiacetal intermediate between G3P and a cysteine residue, and this hemiacetal intermediate is then oxidized to a thioester, with concomitant reduction of NAD to NADH. The reduced NADH is then exchanged with the second NAD, and the thioester is attacked by a nucleophilic inorganic phosphate to produce BPG. The sequence is that of Glyceraldehyde-3-phosphate dehydrogenase 2 (gap2) from Streptomyces avermitilis (strain ATCC 31267 / DSM 46492 / JCM 5070 / NBRC 14893 / NCIMB 12804 / NRRL 8165 / MA-4680).